Here is a 78-residue protein sequence, read N- to C-terminus: Consomatin Nc1 (78 aa).

Positions 1–22 (MQTAYWVMVMVMVWITAPLSEG) are cleaved as a signal peptide. Positions 23–59 (GKPNDVIRGLVPDDLTPQLILRSLISRRRSDKDVGKR) are excised as a propeptide. Glu61 is modified (4-carboxyglutamate). Residues Cys62 and Cys67 are joined by a disulfide bond. D-tryptophan is present on Trp64. Pro70 bears the 4-hydroxyproline mark. Residues 71 to 78 (LSRRHDLG) constitute a propeptide that is removed on maturation.

The protein belongs to the conotoxin C superfamily. Consomatin family. In terms of tissue distribution, expressed by the venom duct.

The protein resides in the secreted. Its function is as follows. Moderately activates human somatostatin receptors (SSTR) with a preferential activation of SSTR1 and SSTR4. In vivo, does not cause behavioral changes in mice within a few minutes of intracranial injection, but causes a progressive loss of movement thereafter. Four to five hours after injection, mice recover, even with the highest dose tested. Shows antinociception and antihyperalgesia activities in two mouse models of acute pain, most probably by acting outside the central nervous system. The protein is Consomatin Nc1 of Conus neocostatus (Cone snail).